Here is a 534-residue protein sequence, read N- to C-terminus: Anther-specific proline-rich protein APG (534 aa).

The signal sequence occupies residues 1–35 (MKRSSLVDSCSYSRIFRSIFCLLSFCIFFLTTTNA). A compositionally biased stretch (pro residues) spans 59–196 (NPPTPDPSPK…SPKPAPSPPK (138 aa)). The segment at 59–202 (NPPTPDPSPK…SPPKPENKTI (144 aa)) is disordered. The Nucleophile role is filled by S211. Residues D508 and H511 contribute to the active site.

The protein belongs to the 'GDSL' lipolytic enzyme family. As to expression, found in sporophytic and gametophytic cell types in the anther, only in male fertile plants.

The sequence is that of Anther-specific proline-rich protein APG (APG) from Arabidopsis thaliana (Mouse-ear cress).